We begin with the raw amino-acid sequence, 411 residues long: Secretion apparatus protein BsaZ (411 aa).

A run of 4 helical transmembrane segments spans residues 28–48 (IVAL…VDLT), 80–100 (IAAP…LVQS), 137–157 (ALLY…LYHA), and 175–195 (IVLT…VLIL). The disordered stretch occupies residues 341-411 (AANRGGPPPE…APARTGDQNA (71 aa)). Residues 370–404 (DACADNAFPDDAPPGAAAPNAGSPDGPAPDGGAPA) are compositionally biased toward low complexity.

The protein belongs to the type III secretion exporter family.

It localises to the cell membrane. In terms of biological role, part of the bsa type III secretion system, is involved in the intracellular replication of invading bacteria inside the host cell. Probably necessary for the lysis of the vacuole membrane and escape into the host cell cytoplasm. This chain is Secretion apparatus protein BsaZ (bsaZ), found in Burkholderia pseudomallei (strain K96243).